The primary structure comprises 430 residues: Adenylosuccinate synthetase (430 aa).

GTP-binding positions include 13–19 (GDEGKGK) and 41–43 (GHT). The active-site Proton acceptor is the Asp14. Mg(2+) is bound by residues Asp14 and Gly41. IMP-binding positions include 14 to 17 (DEGK), 39 to 42 (NAGH), Thr130, Arg144, Gln225, Thr240, and Arg304. His42 serves as the catalytic Proton donor. 300–306 (ASTGRPR) serves as a coordination point for substrate. GTP contacts are provided by residues Arg306, 332 to 334 (KLD), and 414 to 416 (STG).

It belongs to the adenylosuccinate synthetase family. In terms of assembly, homodimer. Mg(2+) serves as cofactor.

It localises to the cytoplasm. The catalysed reaction is IMP + L-aspartate + GTP = N(6)-(1,2-dicarboxyethyl)-AMP + GDP + phosphate + 2 H(+). Its pathway is purine metabolism; AMP biosynthesis via de novo pathway; AMP from IMP: step 1/2. Its function is as follows. Plays an important role in the de novo pathway of purine nucleotide biosynthesis. Catalyzes the first committed step in the biosynthesis of AMP from IMP. In Xanthomonas axonopodis pv. citri (strain 306), this protein is Adenylosuccinate synthetase.